A 301-amino-acid polypeptide reads, in one-letter code: GPN-loop GTPase 3 (301 aa).

GTP is bound at residue 13–18; that stretch reads GAGKST. Residues 70–72 carry the Gly-Pro-Asn (GPN)-loop; involved in dimer interface motif; the sequence is GPN. 176–179 serves as a coordination point for GTP; the sequence is SKMD. A disordered region spans residues 212–232; sequence IAEGQDAEDDESKAPDEKDQV. Residues 223–232 are compositionally biased toward basic and acidic residues; sequence SKAPDEKDQV.

It belongs to the GPN-loop GTPase family. As to quaternary structure, heterodimers with GPN1 or GPN2. Binds to RNA polymerase II (RNAPII).

Small GTPase required for proper nuclear import of RNA polymerase II and III (RNAPII and RNAPIII). May act at an RNAP assembly step prior to nuclear import. The chain is GPN-loop GTPase 3 from Gibberella zeae (strain ATCC MYA-4620 / CBS 123657 / FGSC 9075 / NRRL 31084 / PH-1) (Wheat head blight fungus).